Consider the following 64-residue polypeptide: Conotoxin Pu3.5 (64 aa).

A signal peptide spans 1-16 (LGVLLTICLLLFPLTA). Positions 17 to 49 (VPLDGDQPADQPAGRMQDDISSEQHPFFDPVKR) are excised as a propeptide. Disulfide bonds link cysteine 50–cysteine 63, cysteine 51–cysteine 58, and cysteine 54–cysteine 62.

Belongs to the conotoxin M superfamily. As to expression, expressed by the venom duct.

It localises to the secreted. This Conus pulicarius (Flea-bitten cone) protein is Conotoxin Pu3.5.